The chain runs to 195 residues: MRTAQVSRNTLETEITVSLNLDGSGTSRLATGVPFLDHMLDQIARHGLIDLDIAAKGDLHIDAHHTVEDTGITLGQAFAKALADKKGIRRYGHAYVPLDEALSRVVIDLSGRPGLEYHVDYTRARIGDFDVDLFLEFFRGFVNHAGVTLHIDNLRGINAHHQAETIFKAFGRALRMAVETDARLGDVTPSTKGAL.

The protein belongs to the imidazoleglycerol-phosphate dehydratase family.

It localises to the cytoplasm. It carries out the reaction D-erythro-1-(imidazol-4-yl)glycerol 3-phosphate = 3-(imidazol-4-yl)-2-oxopropyl phosphate + H2O. It functions in the pathway amino-acid biosynthesis; L-histidine biosynthesis; L-histidine from 5-phospho-alpha-D-ribose 1-diphosphate: step 6/9. The sequence is that of Imidazoleglycerol-phosphate dehydratase from Thiobacillus denitrificans (strain ATCC 25259 / T1).